Here is a 379-residue protein sequence, read N- to C-terminus: Anhydro-N-acetylmuramic acid kinase (379 aa).

ATP is bound at residue 9 to 16 (GTSADGVD).

The protein belongs to the anhydro-N-acetylmuramic acid kinase family.

The enzyme catalyses 1,6-anhydro-N-acetyl-beta-muramate + ATP + H2O = N-acetyl-D-muramate 6-phosphate + ADP + H(+). Its pathway is amino-sugar metabolism; 1,6-anhydro-N-acetylmuramate degradation. It participates in cell wall biogenesis; peptidoglycan recycling. Catalyzes the specific phosphorylation of 1,6-anhydro-N-acetylmuramic acid (anhMurNAc) with the simultaneous cleavage of the 1,6-anhydro ring, generating MurNAc-6-P. Is required for the utilization of anhMurNAc either imported from the medium or derived from its own cell wall murein, and thus plays a role in cell wall recycling. In Prochlorococcus marinus (strain MIT 9313), this protein is Anhydro-N-acetylmuramic acid kinase.